A 110-amino-acid chain; its full sequence is RNA polymerase II transcriptional coactivator (110 aa).

Positions Met1–Thr50 are disordered. The span at Pro17 to Gly42 shows a compositional bias: basic and acidic residues.

Belongs to the transcriptional coactivator PC4 family.

It localises to the nucleus. Functionally, general coactivator that functions cooperatively with TAFs and mediates functional interactions between upstream activators and the general transcriptional machinery. Binds single-stranded DNA. Binds specifically to the NssBF element, a short nucleotide sequence of the 1731 retrotransposon, to repress promoter activity. The chain is RNA polymerase II transcriptional coactivator (Ssb-c31a) from Drosophila melanogaster (Fruit fly).